The primary structure comprises 413 residues: DNA polymerase IV 1 (413 aa).

Positions 7–188 constitute a UmuC domain; sequence IFHVDMNSFY…LPIEEMYGIG (182 aa). Residues aspartate 11 and aspartate 107 each coordinate Mg(2+). Glutamate 108 is a catalytic residue.

Belongs to the DNA polymerase type-Y family. In terms of assembly, monomer. It depends on Mg(2+) as a cofactor.

It localises to the cytoplasm. It carries out the reaction DNA(n) + a 2'-deoxyribonucleoside 5'-triphosphate = DNA(n+1) + diphosphate. Its function is as follows. Poorly processive, error-prone DNA polymerase involved in untargeted mutagenesis. Copies undamaged DNA at stalled replication forks, which arise in vivo from mismatched or misaligned primer ends. These misaligned primers can be extended by PolIV. Exhibits no 3'-5' exonuclease (proofreading) activity. May be involved in translesional synthesis, in conjunction with the beta clamp from PolIII. This is DNA polymerase IV 1 (dinB1) from Halalkalibacterium halodurans (strain ATCC BAA-125 / DSM 18197 / FERM 7344 / JCM 9153 / C-125) (Bacillus halodurans).